The sequence spans 597 residues: Lysine--tRNA ligase (597 aa).

The Mg(2+) site is built by E501 and E508.

It belongs to the class-II aminoacyl-tRNA synthetase family. Homodimer. Mg(2+) serves as cofactor.

The protein resides in the cytoplasm. It catalyses the reaction tRNA(Lys) + L-lysine + ATP = L-lysyl-tRNA(Lys) + AMP + diphosphate. The chain is Lysine--tRNA ligase (lysS) from Aquifex aeolicus (strain VF5).